The sequence spans 34 residues: Omega-ctenitoxin-Pn2a (34 aa).

Cystine bridges form between C2/C16, C9/C26, and C15/C28.

Belongs to the neurotoxin 02 (plectoxin) family. 01 (Tx3) subfamily. In terms of tissue distribution, expressed by the venom gland.

It is found in the secreted. In terms of biological role, inhibits all known high-voltage activated calcium channels (L-, P/Q- and R-type currents) (Cav), and most effectively the P/Q- (Cav2.1/CACNA1A) and R-type (Cav2.3/CACNA1E) currents. In rat brain, inhibits glutamate release, neuronal death and loss of neurotransmission in the hippocampus resulting from ischemia. In vivo, induces rapid general flaccid paralysis followed by death in 10-30 minutes at dose levels of 5 ug per mouse. This is Omega-ctenitoxin-Pn2a from Phoneutria nigriventer (Brazilian armed spider).